We begin with the raw amino-acid sequence, 158 residues long: Cyclic pyranopterin monophosphate synthase (158 aa).

Substrate is bound by residues 73–75 (LCH) and 110–111 (ME). Asp-125 is an active-site residue.

It belongs to the MoaC family. Homohexamer; trimer of dimers.

It catalyses the reaction (8S)-3',8-cyclo-7,8-dihydroguanosine 5'-triphosphate = cyclic pyranopterin phosphate + diphosphate. Its pathway is cofactor biosynthesis; molybdopterin biosynthesis. Its function is as follows. Catalyzes the conversion of (8S)-3',8-cyclo-7,8-dihydroguanosine 5'-triphosphate to cyclic pyranopterin monophosphate (cPMP). In Ectopseudomonas mendocina (strain ymp) (Pseudomonas mendocina), this protein is Cyclic pyranopterin monophosphate synthase.